The chain runs to 715 residues: Fatty acid oxidation complex subunit alpha (715 aa).

The tract at residues 1–190 (MTTTSAFMLN…KAGLVDDVVP (190 aa)) is enoyl-CoA hydratase. The segment at 306–714 (GPLNSVGILG…FWTNGETDQG (409 aa)) is 3-hydroxyacyl-CoA dehydrogenase.

In the N-terminal section; belongs to the enoyl-CoA hydratase/isomerase family. The protein in the central section; belongs to the 3-hydroxyacyl-CoA dehydrogenase family. As to quaternary structure, heterotetramer of two alpha chains (FadJ) and two beta chains (FadI).

It localises to the cytoplasm. It catalyses the reaction a (3S)-3-hydroxyacyl-CoA = a (2E)-enoyl-CoA + H2O. It carries out the reaction a 4-saturated-(3S)-3-hydroxyacyl-CoA = a (3E)-enoyl-CoA + H2O. The catalysed reaction is a (3S)-3-hydroxyacyl-CoA + NAD(+) = a 3-oxoacyl-CoA + NADH + H(+). The enzyme catalyses (3S)-3-hydroxybutanoyl-CoA = (3R)-3-hydroxybutanoyl-CoA. The protein operates within lipid metabolism; fatty acid beta-oxidation. Catalyzes the formation of a hydroxyacyl-CoA by addition of water on enoyl-CoA. Also exhibits 3-hydroxyacyl-CoA epimerase and 3-hydroxyacyl-CoA dehydrogenase activities. The polypeptide is Fatty acid oxidation complex subunit alpha (Salmonella paratyphi A (strain ATCC 9150 / SARB42)).